Reading from the N-terminus, the 247-residue chain is NADH dehydrogenase [ubiquinone] flavoprotein 2, mitochondrial (247 aa).

Residues 1-40 (MFRSLLKRTTFLNQLNKSNGFNRNYFKQSTLTRSDALSRH) constitute a mitochondrion transit peptide. [2Fe-2S] cluster-binding residues include C135, C140, C176, and C180. A disordered region spans residues 211–247 (NKPTKIGPQTHRKAAEGPQGKTTLLEPPVGPTCRDDL).

Belongs to the complex I 24 kDa subunit family. As to quaternary structure, complex I is composed of 45 different subunits. This is a component of the flavoprotein-sulfur (FP) fragment of the enzyme. [2Fe-2S] cluster is required as a cofactor.

It is found in the mitochondrion inner membrane. The enzyme catalyses a ubiquinone + NADH + 5 H(+)(in) = a ubiquinol + NAD(+) + 4 H(+)(out). Core subunit of the mitochondrial membrane respiratory chain NADH dehydrogenase (Complex I) that is believed to belong to the minimal assembly required for catalysis. Complex I functions in the transfer of electrons from NADH to the respiratory chain. The immediate electron acceptor for the enzyme is believed to be ubiquinone. In Dictyostelium discoideum (Social amoeba), this protein is NADH dehydrogenase [ubiquinone] flavoprotein 2, mitochondrial (ndufv2).